A 40-amino-acid polypeptide reads, in one-letter code: Photosystem II reaction center protein J (40 aa).

The helical transmembrane segment at 8 to 28 (IPLWIIGTVTGILVIGLIGIF) threads the bilayer.

The protein belongs to the PsbJ family. As to quaternary structure, PSII is composed of 1 copy each of membrane proteins PsbA, PsbB, PsbC, PsbD, PsbE, PsbF, PsbH, PsbI, PsbJ, PsbK, PsbL, PsbM, PsbT, PsbX, PsbY, PsbZ, Psb30/Ycf12, at least 3 peripheral proteins of the oxygen-evolving complex and a large number of cofactors. It forms dimeric complexes.

It is found in the plastid. It localises to the chloroplast thylakoid membrane. Its function is as follows. One of the components of the core complex of photosystem II (PSII). PSII is a light-driven water:plastoquinone oxidoreductase that uses light energy to abstract electrons from H(2)O, generating O(2) and a proton gradient subsequently used for ATP formation. It consists of a core antenna complex that captures photons, and an electron transfer chain that converts photonic excitation into a charge separation. This chain is Photosystem II reaction center protein J, found in Eucalyptus globulus subsp. globulus (Tasmanian blue gum).